Consider the following 440-residue polypeptide: MENIQKLIARYPLVEDLVALKETTWFNPGATSLAQGLPYVGLTEQDVNAAHDRLARFAPYLAKAFPQTAAAGGMIESDVVAIPAMQKRLEKEYGQTIDGEMLLKKDSHLAISGSIKARGGIYEVLTHAEKLALEAGLLTTDDDYSVLLSPEFKQFFSQYSIAVGSTGNLGLSIGIMSACIGFKVTVHMSADARAWKKAKLRSHGVTVVEYEDDYGVAVEQGRKAAQSDPNCFFIDDENSRTLFLGYAVAGQRLKAQFAQQGRVVDASHPLFVYLPCGVGGGPGGVAFGLKLAFGDNVHCFFAEPTHSPCMLLGVYTGLHDAISVQDIGIDNLTAADGLAVGRASGFVGRAMERLLDGLYTLDDQTMYDMLGWLAQEEGIRLEPSALAGMAGPQRICAAAEYQQRHGFSQTQLGNATHLVWATGGGMVPEDEMEQYLAKGR.

Position 116 is an N6-(pyridoxal phosphate)lysine (lysine 116).

The protein belongs to the serine/threonine dehydratase family. DsdA subfamily. Monomer. The cofactor is pyridoxal 5'-phosphate.

The catalysed reaction is D-serine = pyruvate + NH4(+). This chain is D-serine dehydratase, found in Salmonella agona (strain SL483).